The sequence spans 667 residues: Probable Na(+)/H(+) antiporter nhx-9 (667 aa).

The next 8 helical transmembrane spans lie at 41–61 (VYVI…FNLM), 73–93 (LLII…LSGA), 97–117 (SHTF…YFMP), 128–148 (VLVF…GSLL), 165–185 (ILVF…AVFE), 192–212 (FLFI…VVLY), 236–256 (LSFF…AIAA), and 268–288 (ILAP…AEMV). A glycan (N-linked (GlcNAc...) asparagine) is linked at Asn310. A run of 4 helical transmembrane segments spans residues 325 to 345 (MLAQ…TISS), 351 to 371 (LYFI…GIVV), 390 to 410 (FIMS…VSIP), and 418 to 438 (MFIT…GITI). A disordered region spans residues 637-667 (TEQLPSETPFHSGRRQSTGDLNATRRADFNV). Thr644 carries the phosphothreonine modification.

This sequence belongs to the monovalent cation:proton antiporter 1 (CPA1) transporter (TC 2.A.36) family. Phosphorylated. In early stage larva, expressed in the twin excretory cell processes. At later larval stages, expression is more restricted, resulting in a 'beads on a chain' appearance.

The protein localises to the cell membrane. In terms of biological role, serves some physiological function other than regulation of cellular pH. This chain is Probable Na(+)/H(+) antiporter nhx-9 (nhx-9), found in Caenorhabditis elegans.